Here is an 836-residue protein sequence, read N- to C-terminus: Phenylalanine--tRNA ligase beta subunit (836 aa).

Residues 44–160 (PETTGPLVIG…EIAEPGTDAR (117 aa)) enclose the tRNA-binding domain. A B5 domain is found at 420-495 (PSMPQIRMKT…RLEGLEDIPT (76 aa)). Asp-473, Asp-479, Glu-482, and Glu-483 together coordinate Mg(2+). One can recognise an FDX-ACB domain in the interval 742–835 (SAFPVLHQDL…AAELFGATMR (94 aa)).

The protein belongs to the phenylalanyl-tRNA synthetase beta subunit family. Type 1 subfamily. As to quaternary structure, tetramer of two alpha and two beta subunits. It depends on Mg(2+) as a cofactor.

The protein localises to the cytoplasm. The catalysed reaction is tRNA(Phe) + L-phenylalanine + ATP = L-phenylalanyl-tRNA(Phe) + AMP + diphosphate + H(+). This chain is Phenylalanine--tRNA ligase beta subunit, found in Corynebacterium diphtheriae (strain ATCC 700971 / NCTC 13129 / Biotype gravis).